A 628-amino-acid chain; its full sequence is Nucleoside-triphosphatase 2 (628 aa).

A signal peptide spans 1 to 25; that stretch reads MWLPVYVPLLLVFGVSLSLPHGSLG. The active-site Proton acceptor is the E236. N-linked (GlcNAc...) asparagine glycosylation occurs at N432.

The protein belongs to the GDA1/CD39 NTPase family. In terms of assembly, homotetramer.

Its subcellular location is the secreted. It is found in the parasitophorous vacuole. The enzyme catalyses a ribonucleoside 5'-triphosphate + H2O = a ribonucleoside 5'-diphosphate + phosphate + H(+). In terms of biological role, may perform an important processing step in the conversion of high energy nucleotides prior to uptake by the parasite. NTPAse-II has a specific activity 4.5-fold lower than NTPAse-I in hydrolysis of ATP. The primary difference between these isozymes lies in their ability to hydrolyze nucleoside triphosphate versus diphosphate substrates. While NTPAse-II hydrolyzes ATP to ADP and ADP to AMP at almost the same rate, NTPAse-I hydrolyzes ADP to AMP at a much slower rate (0.7% of the rate for ATP). This is Nucleoside-triphosphatase 2 (NTP1) from Toxoplasma gondii.